Consider the following 72-residue polypeptide: Alpha-elapitoxin-Dpp2a (72 aa).

Disulfide bonds link Cys-3/Cys-21, Cys-14/Cys-42, Cys-27/Cys-31, Cys-46/Cys-57, and Cys-58/Cys-63.

It belongs to the three-finger toxin family. Long-chain subfamily. Type II alpha-neurotoxin sub-subfamily. In terms of tissue distribution, expressed by the venom gland.

It localises to the secreted. Binds with high affinity to muscular (alpha-1/CHRNA1) and neuronal (alpha-7/CHRNA7) nicotinic acetylcholine receptor (nAChR) and inhibits acetylcholine from binding to the receptor, thereby impairing neuromuscular and neuronal transmission. In Dendroaspis polylepis polylepis (Black mamba), this protein is Alpha-elapitoxin-Dpp2a.